The following is a 177-amino-acid chain: MSEFITVARPYAKAAFDFAVEHNSLDRWQNMLTFSAEVTRNESVAEMLSGALAPETLAAFFIDICGDQLDESGQNFIKVMAENGRLQVIPDVLQQFIALRDAMEATADVEVTSAAPLTQAQLDKISAAMEQRLSRKVKLNCKIDKSVLAGVVIRAGDLVIDGSIRGRLDRLTDVLQS.

This sequence belongs to the ATPase delta chain family. In terms of assembly, F-type ATPases have 2 components, F(1) - the catalytic core - and F(0) - the membrane proton channel. F(1) has five subunits: alpha(3), beta(3), gamma(1), delta(1), epsilon(1). F(0) has three main subunits: a(1), b(2) and c(10-14). The alpha and beta chains form an alternating ring which encloses part of the gamma chain. F(1) is attached to F(0) by a central stalk formed by the gamma and epsilon chains, while a peripheral stalk is formed by the delta and b chains.

The protein localises to the cell inner membrane. F(1)F(0) ATP synthase produces ATP from ADP in the presence of a proton or sodium gradient. F-type ATPases consist of two structural domains, F(1) containing the extramembraneous catalytic core and F(0) containing the membrane proton channel, linked together by a central stalk and a peripheral stalk. During catalysis, ATP synthesis in the catalytic domain of F(1) is coupled via a rotary mechanism of the central stalk subunits to proton translocation. In terms of biological role, this protein is part of the stalk that links CF(0) to CF(1). It either transmits conformational changes from CF(0) to CF(1) or is implicated in proton conduction. The sequence is that of ATP synthase subunit delta from Edwardsiella ictaluri (strain 93-146).